We begin with the raw amino-acid sequence, 297 residues long: Bifunctional protein FolD (297 aa).

NADP(+)-binding positions include 167–169 (GRS) and isoleucine 233.

This sequence belongs to the tetrahydrofolate dehydrogenase/cyclohydrolase family. Homodimer.

The catalysed reaction is (6R)-5,10-methylene-5,6,7,8-tetrahydrofolate + NADP(+) = (6R)-5,10-methenyltetrahydrofolate + NADPH. It catalyses the reaction (6R)-5,10-methenyltetrahydrofolate + H2O = (6R)-10-formyltetrahydrofolate + H(+). Its pathway is one-carbon metabolism; tetrahydrofolate interconversion. Functionally, catalyzes the oxidation of 5,10-methylenetetrahydrofolate to 5,10-methenyltetrahydrofolate and then the hydrolysis of 5,10-methenyltetrahydrofolate to 10-formyltetrahydrofolate. The sequence is that of Bifunctional protein FolD from Zymomonas mobilis subsp. mobilis (strain ATCC 31821 / ZM4 / CP4).